Reading from the N-terminus, the 522-residue chain is Glutamate--cysteine ligase (522 aa).

The protein belongs to the glutamate--cysteine ligase type 1 family. Type 1 subfamily.

It catalyses the reaction L-cysteine + L-glutamate + ATP = gamma-L-glutamyl-L-cysteine + ADP + phosphate + H(+). It functions in the pathway sulfur metabolism; glutathione biosynthesis; glutathione from L-cysteine and L-glutamate: step 1/2. In Shewanella pealeana (strain ATCC 700345 / ANG-SQ1), this protein is Glutamate--cysteine ligase.